The following is a 351-amino-acid chain: Foldase protein PrsA 1 (351 aa).

Residues 1–22 form the signal peptide; it reads MKNSNKLIASVVTLASVMALAA. Residue cysteine 23 is the site of N-palmitoyl cysteine attachment. A lipid anchor (S-diacylglycerol cysteine) is attached at cysteine 23. The 96-residue stretch at 145-240 folds into the PpiC domain; the sequence is TPTMAVEMIT…KKFYIVKVTK (96 aa). 2 stretches are compositionally biased toward low complexity: residues 303–317 and 326–351; these read KTKA…SESS and ESEQ…PAAQ. The interval 303–351 is disordered; that stretch reads KTKAASESSTTSESSKAAEENPSESEQTQTSSAEEPTETEAQTQEPAAQ.

Belongs to the PrsA family.

Its subcellular location is the cell membrane. The enzyme catalyses [protein]-peptidylproline (omega=180) = [protein]-peptidylproline (omega=0). Functionally, plays a major role in protein secretion by helping the post-translocational extracellular folding of several secreted proteins. In Streptococcus pyogenes serotype M6 (strain ATCC BAA-946 / MGAS10394), this protein is Foldase protein PrsA 1.